A 504-amino-acid polypeptide reads, in one-letter code: Pyrichalasin C-7 hydroxylase (504 aa).

The signal sequence occupies residues 1-17; it reads MLNSAACIVLAITAVLG. A heme-binding site is contributed by Cys-449.

The protein belongs to the cytochrome P450 family. Requires heme as cofactor.

The protein operates within mycotoxin biosynthesis. Functionally, cytochrome P450 monooxygenase; part of the gene cluster that mediates the biosynthesis of the mycotoxin pyrichalasin H, a tyrosine-derived cytochalasan that inhibits the growth of rice seedlings, but also inhibits lymphocyte capping and actin polymerization and alters cell morphology. Pyrichalasin H is indicated as the responsible agent for the genus-specific pathogenicity of M.grisea toward crabgrass. The first step in the pathway is catalyzed by the O-methyltransferase pyiA which methylates free tyrosine to generate the precursor O-methyltyrosine. The hybrid PKS-NRPS pyiS, assisted by the enoyl reductase pyiC, are responsible for fusion of the O-methyltyrosine precursor and the polyketide backbone. The polyketide synthase module (PKS) of pyiS is responsible for the synthesis of the polyketide backbone and the downstream nonribosomal peptide synthetase (NRPS) amidates the carboxyl end of the polyketide with the O-methyltyrosine precursor. As the NRPS A-domain demonstrates substrate tolerance, pyiS can also use phenylalanine, tyrosine and even para-chlorophenylalanine as amino acid precursor, which leads to the production of novel cytochalasans, including halogenated cytochalasans. Because pyiS lacks a designated enoylreductase (ER) domain, the required activity is provided the enoyl reductase pyiC. Reduction by the hydrolyase pyiE leads to 1,5-dihydropyrrolone, which is substrate for dehydration and intra-molecular Diels-Alder cyclization by the Diels-Alderase pyiF to yield the required isoindolone-fused macrocycle. The tailoring cytochrome P450 monooxygenases piyD and piyG catalyze the hydroxylation at C-18 and C-7, respectivily, whereas the short-chain dehydrogenase/reductase pyiH reduces the carbonyl at C-21 in preparation for the transfer of an acetyl group by the acetyltransferase pyiB. These 3 reactions whose order is not clear yet, lead to the production of O-methylpyrichalasin J, a deacetylated pyrichalasin H. Finally, pyiB to converts O-methylpyrichalasin J into the final product pyrichalasin H via acetylation of C-21. This chain is Pyrichalasin C-7 hydroxylase, found in Pyricularia grisea (Crabgrass-specific blast fungus).